We begin with the raw amino-acid sequence, 81 residues long: Photosystem I iron-sulfur center (81 aa).

4Fe-4S ferredoxin-type domains are found at residues Ala2–Trp31 and Ile39–Tyr68. [4Fe-4S] cluster contacts are provided by Cys11, Cys14, Cys17, Cys21, Cys48, Cys51, Cys54, and Cys58.

The eukaryotic PSI reaction center is composed of at least 11 subunits. It depends on [4Fe-4S] cluster as a cofactor.

The protein resides in the plastid. Its subcellular location is the chloroplast thylakoid membrane. It carries out the reaction reduced [plastocyanin] + hnu + oxidized [2Fe-2S]-[ferredoxin] = oxidized [plastocyanin] + reduced [2Fe-2S]-[ferredoxin]. In terms of biological role, apoprotein for the two 4Fe-4S centers FA and FB of photosystem I (PSI); essential for photochemical activity. FB is the terminal electron acceptor of PSI, donating electrons to ferredoxin. The C-terminus interacts with PsaA/B/D and helps assemble the protein into the PSI complex. Required for binding of PsaD and PsaE to PSI. PSI is a plastocyanin-ferredoxin oxidoreductase, converting photonic excitation into a charge separation, which transfers an electron from the donor P700 chlorophyll pair to the spectroscopically characterized acceptors A0, A1, FX, FA and FB in turn. This Adiantum capillus-veneris (Maidenhair fern) protein is Photosystem I iron-sulfur center.